The primary structure comprises 393 residues: Protein DDI1 homolog 2 (393 aa).

The region spanning 1 to 81 (MLITVYCVRR…VILRQKEAPE (81 aa)) is the Ubiquitin-like domain. Positions 82–127 (TRPAAPFPGLDFSTIAVPGASSQPDPSQPQAPPPPPDTSSFPQGLD) are disordered. Positions 107–118 (PSQPQAPPPPPD) are enriched in pro residues. Residue D246 is part of the active site. The Ubiquitin-binding signature appears at 370–389 (EEIADRELAEVLQKSADEAD).

It belongs to the DDI1 family. As to quaternary structure, homodimer.

The protein localises to the cytoplasm. It localises to the cytosol. It is found in the chromosome. In terms of biological role, aspartic protease that mediates the cleavage of NFE2L1/NRF1 at 'Leu-104', thereby promoting release of NFE2L1/NRF1 from the endoplasmic reticulum membrane. Ubiquitination of NFE2L1/NRF1 is a prerequisite for cleavage, suggesting that DDI2 specifically recognizes and binds ubiquitinated NFE2L1/NRF1. Seems to act as a proteasomal shuttle which links the proteasome and replication fork proteins like RTF2. Required for cellular survival following replication stress. The protein is Protein DDI1 homolog 2 (ddi2) of Xenopus laevis (African clawed frog).